Reading from the N-terminus, the 125-residue chain is Antitoxin MazE5 (125 aa).

As to quaternary structure, forms a complex with cognate toxin MazF5.

Its function is as follows. Antitoxin component of a type II toxin-antitoxin (TA) system. Upon expression in M.smegmatis neutralizes the effect of cognate toxin MazF5. This chain is Antitoxin MazE5 (mazE5), found in Mycobacterium tuberculosis (strain ATCC 25618 / H37Rv).